Reading from the N-terminus, the 348-residue chain is Protein RecA (348 aa).

66–73 (GPESSGKT) serves as a coordination point for ATP.

It belongs to the RecA family.

The protein localises to the cytoplasm. Its function is as follows. Can catalyze the hydrolysis of ATP in the presence of single-stranded DNA, the ATP-dependent uptake of single-stranded DNA by duplex DNA, and the ATP-dependent hybridization of homologous single-stranded DNAs. It interacts with LexA causing its activation and leading to its autocatalytic cleavage. This is Protein RecA from Legionella pneumophila.